Reading from the N-terminus, the 343-residue chain is DNA polymerase III subunit delta (343 aa).

Domain regions lie at residues 1–140, 141–210, and 211–343; these read MIRL…VTCQ, TPEQ…NDAA, and HFTP…FIDG.

Belongs to the DNA polymerase HolA subunit family. The DNA polymerase III holoenzyme complex contains at least 10 different subunits organized into 3 functionally essential subassemblies: the Pol III core, the beta sliding clamp processivity factor and the clamp-loading complex. The Pol III core (subunits alpha, epsilon and theta) contains the polymerase and the 3'-5' exonuclease proofreading activities. The polymerase is tethered to the template via the dimeric beta sliding clamp processivity factor. The clamp-loading complex (also called gamma complex) assembles the beta sliding clamp onto the primed template and plays a central role in the organization and communication at the replication fork. The clamp-loading complex contains delta, delta', psi and chi, and 3 copies of either or both of two different DnaX proteins, gamma and tau. The DNA replisome complex has a single clamp loader (3 tau and 1 each of delta, delta', psi and chi subunits) which binds 3 Pol III cores (1 core on the leading strand and 2 on the lagging strand) each with a beta sliding clamp dimer. Additional proteins in the replisome are other copies of gamma, psi and chi, Ssb, DNA helicase and RNA primase. The clamp loader hydrolyzes ATP to assemble the beta processivity factor onto the primed template and plays a central role in the organization and communication at the replication fork; the minimal complex to load the beta sliding clamp on DNA is delta, delta', gamma.

It catalyses the reaction DNA(n) + a 2'-deoxyribonucleoside 5'-triphosphate = DNA(n+1) + diphosphate. Part of the beta sliding clamp loading complex, which hydrolyzes ATP to load the beta clamp onto primed DNA to form the DNA replication pre-initiation complex. DNA polymerase III is a complex, multichain enzyme responsible for most of the replicative synthesis in bacteria. This DNA polymerase also exhibits 3'-5' exonuclease activity. The delta subunit is the wrench that will open the beta subunit dimer, which has been modeled to leave a gap large enough for ssDNA to pass through. The gamma complex (gamma(3),delta,delta') is thought to load beta dimers onto DNA by binding ATP which alters the complex's conformation so it can bind beta sliding clamp dimers and open them at one interface. Primed DNA is recognized, ATP is hydrolyzed releasing the gamma complex and closing the beta sliding clamp ring around the primed DNA. The protein is DNA polymerase III subunit delta (holA) of Escherichia coli (strain K12).